Here is a 245-residue protein sequence, read N- to C-terminus: Eukaryotic translation initiation factor 6 (245 aa).

Y113 bears the Phosphotyrosine mark. T165 carries the phosphothreonine modification. Position 166 is a phosphoserine (S166). Phosphoserine; by CK1 is present on residues S174 and S175. S235 carries the phosphoserine; by PKC modification. S239 and S243 each carry phosphoserine.

Belongs to the eIF-6 family. As to quaternary structure, monomer. Associates with the 60S ribosomal subunit. Interacts with RACK1. Interacts with DICER1, AGO2, TARBP2, MOV10 and RPL7A; they form a large RNA-induced silencing complex (RISC). In terms of processing, phosphorylation at Ser-174 and Ser-175 by CSNK1D/CK1 promotes nuclear export. Ufmylated by UFL1. In terms of tissue distribution, expressed at very high levels in colon carcinoma with lower levels in normal colon and ileum and lowest levels in kidney and muscle (at protein level).

The protein resides in the cytoplasm. It is found in the nucleus. The protein localises to the nucleolus. Binds to the 60S ribosomal subunit and prevents its association with the 40S ribosomal subunit to form the 80S initiation complex in the cytoplasm. Behaves as a stimulatory translation initiation factor downstream insulin/growth factors. Is also involved in ribosome biogenesis. Associates with pre-60S subunits in the nucleus and is involved in its nuclear export. Cytoplasmic release of TIF6 from 60S subunits and nuclear relocalization is promoted by a RACK1 (RACK1)-dependent protein kinase C activity. In tissues responsive to insulin, controls fatty acid synthesis and glycolysis by exerting translational control of adipogenic transcription factors such as CEBPB, CEBPD and ATF4 that have G/C rich or uORF in their 5'UTR. Required for ROS-dependent megakaryocyte maturation and platelets formation, controls the expression of mitochondrial respiratory chain genes involved in reactive oxygen species (ROS) synthesis. Involved in miRNA-mediated gene silencing by the RNA-induced silencing complex (RISC). Required for both miRNA-mediated translational repression and miRNA-mediated cleavage of complementary mRNAs by RISC. Modulates cell cycle progression and global translation of pre-B cells, its activation seems to be rate-limiting in tumorigenesis and tumor growth. This Homo sapiens (Human) protein is Eukaryotic translation initiation factor 6.